We begin with the raw amino-acid sequence, 150 residues long: MLFLKSSRAFSKRLFSSSTVRYRDIQRLTLTGNLTKDVERLQSQKGNEYMRYTVASNNGKDVAPTFHSVYVFDSYNFDRLQTILRKGTRVYVEADAVWRSVPAGNEGSQAKMSLRHVSADVLFYPRNKNGDESGEETHPELDADPMINSF.

The N-terminal 22 residues, Met1–Tyr22, are a transit peptide targeting the mitochondrion. One can recognise an SSB domain in the interval Ile25–Pro125. Residues Asn127–Phe150 are disordered. The span at Lys128 to Leu141 shows a compositional bias: basic and acidic residues.

It localises to the mitochondrion. Functionally, this protein binds preferentially and cooperatively to ss-DNA. Involved in mitochondrial DNA replication. The sequence is that of Single-stranded DNA-binding protein rim1, mitochondrial (rim1) from Schizosaccharomyces pombe (strain 972 / ATCC 24843) (Fission yeast).